An 81-amino-acid polypeptide reads, in one-letter code: Photosystem I iron-sulfur center (81 aa).

4Fe-4S ferredoxin-type domains lie at Ser2 to Trp31 and Ile39 to Tyr68. Positions 11, 14, 17, 21, 48, 51, 54, and 58 each coordinate [4Fe-4S] cluster.

The eukaryotic PSI reaction center is composed of at least 11 subunits. It depends on [4Fe-4S] cluster as a cofactor.

It is found in the plastid. Its subcellular location is the chloroplast thylakoid membrane. It catalyses the reaction reduced [plastocyanin] + hnu + oxidized [2Fe-2S]-[ferredoxin] = oxidized [plastocyanin] + reduced [2Fe-2S]-[ferredoxin]. Apoprotein for the two 4Fe-4S centers FA and FB of photosystem I (PSI); essential for photochemical activity. FB is the terminal electron acceptor of PSI, donating electrons to ferredoxin. The C-terminus interacts with PsaA/B/D and helps assemble the protein into the PSI complex. Required for binding of PsaD and PsaE to PSI. PSI is a plastocyanin-ferredoxin oxidoreductase, converting photonic excitation into a charge separation, which transfers an electron from the donor P700 chlorophyll pair to the spectroscopically characterized acceptors A0, A1, FX, FA and FB in turn. The sequence is that of Photosystem I iron-sulfur center from Triticum aestivum (Wheat).